We begin with the raw amino-acid sequence, 148 residues long: Large ribosomal subunit protein uL15 (148 aa).

Residues 12 to 52 (ERKNRKRVGRGGGSGWGGTSGKGHKGQNARSGGGVPAWFEG) form a disordered region. The segment covering 21 to 32 (RGGGSGWGGTSG) has biased composition (gly residues).

This sequence belongs to the universal ribosomal protein uL15 family. In terms of assembly, part of the 50S ribosomal subunit.

Functionally, binds to the 23S rRNA. This chain is Large ribosomal subunit protein uL15, found in Maridesulfovibrio salexigens (strain ATCC 14822 / DSM 2638 / NCIMB 8403 / VKM B-1763) (Desulfovibrio salexigens).